We begin with the raw amino-acid sequence, 461 residues long: Porin AaxA (461 aa).

Residues 1–22 (MSFRSVLLTALLSLSFTTTMQA) form the signal peptide.

The protein belongs to the OprB family.

Its subcellular location is the cell outer membrane. In terms of biological role, facilitates L-arginine uptake, as part of the AaxABC system. The arginine uptake by the bacterium in the macrophage may be a virulence factor against the host innate immune response. The polypeptide is Porin AaxA (aaxA) (Chlamydia trachomatis serovar L2 (strain ATCC VR-902B / DSM 19102 / 434/Bu)).